Reading from the N-terminus, the 286-residue chain is DegV domain-containing protein M6_Spy1658 (286 aa).

The region spanning 3 to 282 (FTIMTDSTAD…PNTLAVFVIG (280 aa)) is the DegV domain. Hexadecanoate-binding residues include Thr-62 and Ser-94.

Functionally, may bind long-chain fatty acids, such as palmitate, and may play a role in lipid transport or fatty acid metabolism. This Streptococcus pyogenes serotype M6 (strain ATCC BAA-946 / MGAS10394) protein is DegV domain-containing protein M6_Spy1658.